The sequence spans 366 residues: MAGDSFGTLFRFTSFGESHGPAIGCVVEGVPPGIPLTAADLQHDLDRRKPGQSRFTTQRREDDAAEILSGVYEGVTTGTPIAVLIRNTDQRSKDYSDIAQRFRPGHADYTYWVKYGVRDPRGGGRSSARETAVRVAAGAIARKVLTSVLGRPLTIRAAVVEMGGLAIERANWDWLSVDANPFFSPDAAMVAPWEALLDGVRRDGSSVGAVVEVVAEGVPPGLGEPVYDRLDADLAKALMSINAVKGVEIGAGFEAARLRGESNADEMLPNGLGGVRFTSNNAGGVLGGISTGQTIIARLAVKPTSSIMIPRQSVDTQGRPVDVVTKGRHDPCVGIRAVPVAEAMVAVVLADHLLRFRGQCGLPVGL.

NADP(+)-binding residues include arginine 48 and arginine 54. FMN-binding positions include 125 to 127 (RSS), 242 to 243 (NA), glycine 287, 302 to 306 (KPTSS), and arginine 328.

This sequence belongs to the chorismate synthase family. As to quaternary structure, homotetramer. FMNH2 serves as cofactor.

The catalysed reaction is 5-O-(1-carboxyvinyl)-3-phosphoshikimate = chorismate + phosphate. It participates in metabolic intermediate biosynthesis; chorismate biosynthesis; chorismate from D-erythrose 4-phosphate and phosphoenolpyruvate: step 7/7. Functionally, catalyzes the anti-1,4-elimination of the C-3 phosphate and the C-6 proR hydrogen from 5-enolpyruvylshikimate-3-phosphate (EPSP) to yield chorismate, which is the branch point compound that serves as the starting substrate for the three terminal pathways of aromatic amino acid biosynthesis. This reaction introduces a second double bond into the aromatic ring system. The sequence is that of Chorismate synthase from Rhodospirillum rubrum (strain ATCC 11170 / ATH 1.1.1 / DSM 467 / LMG 4362 / NCIMB 8255 / S1).